The sequence spans 45 residues: Large ribosomal subunit protein bL34 (45 aa).

The segment at 1–27 is disordered; the sequence is MTKRTLGGTSRKRKRVSGFRVRMRSHT. Positions 10–27 are enriched in basic residues; it reads SRKRKRVSGFRVRMRSHT.

This sequence belongs to the bacterial ribosomal protein bL34 family.

This is Large ribosomal subunit protein bL34 from Synechococcus sp. (strain CC9902).